The following is a 489-amino-acid chain: Arginine biosynthesis bifunctional protein ArgJ 2, mitochondrial (489 aa).

A mitochondrion-targeting transit peptide spans 1–11 (MLLISRIGARH). 5 residues coordinate substrate: T205, K234, T245, E341, and N484. The active-site Nucleophile is T245.

This sequence belongs to the ArgJ family. In terms of assembly, heterodimer of an alpha and a beta chain. The alpha and beta chains are autoproteolytically processed from a single precursor protein within the mitochondrion.

The protein resides in the mitochondrion matrix. The catalysed reaction is N(2)-acetyl-L-ornithine + L-glutamate = N-acetyl-L-glutamate + L-ornithine. It carries out the reaction L-glutamate + acetyl-CoA = N-acetyl-L-glutamate + CoA + H(+). It functions in the pathway amino-acid biosynthesis; L-arginine biosynthesis; L-ornithine and N-acetyl-L-glutamate from L-glutamate and N(2)-acetyl-L-ornithine (cyclic): step 1/1. It participates in amino-acid biosynthesis; L-arginine biosynthesis; N(2)-acetyl-L-ornithine from L-glutamate: step 1/4. Its function is as follows. Catalyzes two activities which are involved in the cyclic version of arginine biosynthesis: the synthesis of acetylglutamate from glutamate and acetyl-CoA, and of ornithine by transacetylation between acetylornithine and glutamate. This is Arginine biosynthesis bifunctional protein ArgJ 2, mitochondrial from Sclerotinia sclerotiorum (strain ATCC 18683 / 1980 / Ss-1) (White mold).